A 308-amino-acid chain; its full sequence is N-acetylneuraminate lyase (308 aa).

Aceneuramate contacts are provided by threonine 50 and threonine 51. Tyrosine 142 (proton donor) is an active-site residue. Residue lysine 172 is the Schiff-base intermediate with substrate of the active site. Positions 174, 198, 200, 201, and 217 each coordinate aceneuramate.

Belongs to the DapA family. NanA subfamily. Homotetramer.

Its subcellular location is the cytoplasm. It catalyses the reaction aceneuramate = aldehydo-N-acetyl-D-mannosamine + pyruvate. It participates in amino-sugar metabolism; N-acetylneuraminate degradation. Catalyzes the cleavage of N-acetylneuraminic acid (sialic acid) to form pyruvate and N-acetylmannosamine via a Schiff base intermediate. It prevents sialic acids from being recycled and returning to the cell surface. Involved in the N-glycolylneuraminic acid (Neu5Gc) degradation pathway. The sequence is that of N-acetylneuraminate lyase from Gallus gallus (Chicken).